Reading from the N-terminus, the 483-residue chain is Salicylaldehyde dehydrogenase (483 aa).

An NAD(+)-binding site is contributed by G228–G233. Residues E250 and C284 contribute to the active site.

This sequence belongs to the aldehyde dehydrogenase family.

It catalyses the reaction salicylaldehyde + NAD(+) + H2O = salicylate + NADH + 2 H(+). It participates in aromatic compound metabolism; naphthalene degradation. This is Salicylaldehyde dehydrogenase (nahF) from Pseudomonas putida (Arthrobacter siderocapsulatus).